The following is a 311-amino-acid chain: Methionyl-tRNA formyltransferase (311 aa).

Residue 114–117 participates in (6S)-5,6,7,8-tetrahydrofolate binding; it reads SLLP.

Belongs to the Fmt family.

It carries out the reaction L-methionyl-tRNA(fMet) + (6R)-10-formyltetrahydrofolate = N-formyl-L-methionyl-tRNA(fMet) + (6S)-5,6,7,8-tetrahydrofolate + H(+). Attaches a formyl group to the free amino group of methionyl-tRNA(fMet). The formyl group appears to play a dual role in the initiator identity of N-formylmethionyl-tRNA by promoting its recognition by IF2 and preventing the misappropriation of this tRNA by the elongation apparatus. The polypeptide is Methionyl-tRNA formyltransferase (Corynebacterium diphtheriae (strain ATCC 700971 / NCTC 13129 / Biotype gravis)).